Consider the following 567-residue polypeptide: Beta-galactoside-specific lectin 2 (567 aa).

The first 33 residues, 1 to 33, serve as a signal peptide directing secretion; that stretch reads MNARLASSRAWVWCFLMVGLVCGATAKAESKIN. N-linked (GlcNAc...) asparagine glycosylation occurs at asparagine 145. Residue glutamate 198 is part of the active site. Intrachain disulfides connect cysteine 280–cysteine 306 and cysteine 322–cysteine 341. A propeptide spans 288–301 (connecting peptide); the sequence is DVHNWPLVIRPVMV. The region spanning 309 to 439 is the Ricin B-type lectin 1 domain; the sequence is SEPTVRIVGR…DSLGQSWLAS (131 aa). Position 324–326 (324–326) interacts with D-galactose; it reads DVR. Asparagine 362 carries an N-linked (GlcNAc...) asparagine glycan. Cysteine 365 and cysteine 382 are disulfide-bonded. Asparagine 440 is a glycosylation site (N-linked (GlcNAc...) asparagine). A Ricin B-type lectin 2 domain is found at 443 to 566; that stretch reads APREVTIYGF…GNPNQMWLPV (124 aa). 2 disulfides stabilise this stretch: cysteine 456–cysteine 469 and cysteine 495–cysteine 512. 539-541 serves as a coordination point for D-galactose; that stretch reads DVR.

Belongs to the ribosome-inactivating protein family. Type 2 RIP subfamily. Disulfide-linked dimer of A and B chains.

It catalyses the reaction Endohydrolysis of the N-glycosidic bond at one specific adenosine on the 28S rRNA.. Functionally, the A chain is responsible for inhibiting protein synthesis through the catalytic inactivation of 60S ribosomal subunits by removing adenine from position 4,324 of 28S rRNA. The B chain binds to cell receptors and probably facilitates the entry into the cell of the A chain; B chains are also responsible for cell agglutination (lectin activity). The polypeptide is Beta-galactoside-specific lectin 2 (Viscum album (European mistletoe)).